A 671-amino-acid polypeptide reads, in one-letter code: UvrABC system protein C (671 aa).

The 80-residue stretch at 16–95 (TTPGVYRFRD…IKEFKPRFNV (80 aa)) folds into the GIY-YIG domain. Positions 207-242 (KRFISRLEKDMAAAVAELDYERAAGLRDDIIALRKV) constitute a UVR domain.

It belongs to the UvrC family. In terms of assembly, interacts with UvrB in an incision complex.

The protein resides in the cytoplasm. The UvrABC repair system catalyzes the recognition and processing of DNA lesions. UvrC both incises the 5' and 3' sides of the lesion. The N-terminal half is responsible for the 3' incision and the C-terminal half is responsible for the 5' incision. The polypeptide is UvrABC system protein C (Paenarthrobacter aurescens (strain TC1)).